The chain runs to 140 residues: Small ribosomal subunit protein uS19 (140 aa).

The protein belongs to the universal ribosomal protein uS19 family.

Its function is as follows. Protein S19 forms a complex with S13 that binds strongly to the 16S ribosomal RNA. This is Small ribosomal subunit protein uS19 (rps19) from Saccharolobus solfataricus (strain ATCC 35092 / DSM 1617 / JCM 11322 / P2) (Sulfolobus solfataricus).